Here is a 211-residue protein sequence, read N- to C-terminus: Transcriptional regulator GfcR (211 aa).

It belongs to the purine/pyrimidine phosphoribosyltransferase family. GfcR subfamily.

The chain is Transcriptional regulator GfcR from Methanocaldococcus jannaschii (strain ATCC 43067 / DSM 2661 / JAL-1 / JCM 10045 / NBRC 100440) (Methanococcus jannaschii).